We begin with the raw amino-acid sequence, 446 residues long: Tubulin beta-2 chain (446 aa).

GTP is bound by residues Q11, E69, S138, G142, T143, G144, N204, and N226. E69 contributes to the Mg(2+) binding site.

Belongs to the tubulin family. As to quaternary structure, dimer of alpha and beta chains. A typical microtubule is a hollow water-filled tube with an outer diameter of 25 nm and an inner diameter of 15 nM. Alpha-beta heterodimers associate head-to-tail to form protofilaments running lengthwise along the microtubule wall with the beta-tubulin subunit facing the microtubule plus end conferring a structural polarity. Microtubules usually have 13 protofilaments but different protofilament numbers can be found in some organisms and specialized cells. Mg(2+) is required as a cofactor.

Its subcellular location is the cytoplasm. It is found in the cytoskeleton. Functionally, tubulin is the major constituent of microtubules, a cylinder consisting of laterally associated linear protofilaments composed of alpha- and beta-tubulin heterodimers. Microtubules grow by the addition of GTP-tubulin dimers to the microtubule end, where a stabilizing cap forms. Below the cap, tubulin dimers are in GDP-bound state, owing to GTPase activity of alpha-tubulin. The protein is Tubulin beta-2 chain (tub2) of Hypocrea rufa (Trichoderma viride).